The primary structure comprises 258 residues: Acetylglutamate kinase (258 aa).

Residues 41–42 (GG), R63, and N156 each bind substrate.

It belongs to the acetylglutamate kinase family. ArgB subfamily.

The protein resides in the cytoplasm. It carries out the reaction N-acetyl-L-glutamate + ATP = N-acetyl-L-glutamyl 5-phosphate + ADP. Its pathway is amino-acid biosynthesis; L-arginine biosynthesis; N(2)-acetyl-L-ornithine from L-glutamate: step 2/4. Its function is as follows. Catalyzes the ATP-dependent phosphorylation of N-acetyl-L-glutamate. This chain is Acetylglutamate kinase, found in Bacillus amyloliquefaciens (Bacillus velezensis).